The chain runs to 415 residues: Protein maelstrom homolog (415 aa).

A DNA-binding region (HMG box) is located at residues 4-73 (KKAARNAYFF…DPDSTSTYND (70 aa)). The disordered stretch occupies residues 367-399 (SSDPKYSTDKSERSSFEPRGVKPYQGPSGGGRG). Residues 372–386 (YSTDKSERSSFEPRG) show a composition bias toward basic and acidic residues.

This sequence belongs to the maelstrom family.

It localises to the cytoplasm. Its subcellular location is the nucleus. In terms of biological role, plays a central role during spermatogenesis by repressing transposable elements and preventing their mobilization, which is essential for the germline integrity. Acts via the piRNA metabolic process, which mediates the repression of transposable elements during meiosis by forming complexes composed of piRNAs and Piwi proteins and governs the methylation and subsequent repression of transposons. Its association with piP-bodies suggests a participation in the secondary piRNAs metabolic process. Required for the localization of germ-cell factors to the meiotic nuage. This chain is Protein maelstrom homolog (mael), found in Xenopus tropicalis (Western clawed frog).